We begin with the raw amino-acid sequence, 1863 residues long: C-myc promoter-binding protein (1863 aa).

Residues 42–200 (KEPITDVSVI…AVYLCYKKSV (159 aa)) enclose the MABP domain. The uDENN domain occupies 192–364 (VYLCYKKSVA…KVPFPSPQRP (173 aa)). The cDENN domain maps to 385 to 521 (PLPLSGGKFS…PCKNLMNTLN (137 aa)). In terms of domain architecture, dDENN spans 523–641 (LHQQLAKLQQ…CSFVSDKDAS (119 aa)). Residue Ser731 is modified to Phosphoserine. 2 PPR repeats span residues 772–808 (WFIC…MDPP) and 809–843 (DEVC…GIDP). The disordered stretch occupies residues 905-952 (DLGYNSLSKDEVRRGDTSTEDIQEEKDKKGSDCSSLSESESTKGSADC). The span at 912–921 (SKDEVRRGDT) shows a compositional bias: basic and acidic residues. Positions 917-933 (RRGDTSTEDIQEEKDKK) match the Bipartite nuclear localization signal motif. The segment covering 936–949 (DCSSLSESESTKGS) has biased composition (low complexity). Ser1015, Ser1035, Ser1099, Ser1151, and Ser1152 each carry phosphoserine. The interval 1075-1111 (TRPNTLDIGKPPLRSKRDSLEKESSDDDTPFDGSNYL) is disordered. A disordered region spans residues 1177–1202 (TEQQQKEEEEEDEDDSKSISTPSARR). Phosphoserine occurs at positions 1225, 1240, and 1251. Disordered regions lie at residues 1237-1306 (NKKS…SPSF) and 1348-1375 (SKDQ…TDED). The segment covering 1269-1279 (TKSEEKPRDRL) has biased composition (basic and acidic residues). Ser1281 carries the phosphoserine modification. Polar residues-rich tracts occupy residues 1297 to 1306 (DTLTHSSPSF) and 1348 to 1371 (SKDQ…STSL). A phosphoserine mark is found at Ser1508, Ser1587, Ser1589, and Ser1591.

In terms of tissue distribution, expressed ubiquitously. Highest expression in bone marrow, medium in peripheral blood lymphocytes and lowest in spleen. In brain, breast, and prostate, higher expression was seen in normal cells than in tumor cells. Expression is regulated in a growth- and cell cycle-dependent manner.

Its subcellular location is the nucleus. Its function is as follows. Probable guanine nucleotide exchange factor (GEF) which may activate RAB10. Promotes the exchange of GDP to GTP, converting inactive GDP-bound Rab proteins into their active GTP-bound form. According to PubMed:8056341, it may bind to ISRE-like element (interferon-stimulated response element) of MYC P2 promoter. The sequence is that of C-myc promoter-binding protein (DENND4A) from Homo sapiens (Human).